The primary structure comprises 138 residues: Large ribosomal subunit protein uL14m (138 aa).

This sequence belongs to the universal ribosomal protein uL14 family. As to quaternary structure, component of the mitochondrial large ribosomal subunit (mt-LSU). Mature yeast 74S mitochondrial ribosomes consist of a small (37S) and a large (54S) subunit. The 37S small subunit contains a 15S ribosomal RNA (15S mt-rRNA) and 34 different proteins. The 54S large subunit contains a 21S rRNA (21S mt-rRNA) and 46 different proteins.

It is found in the mitochondrion. Its function is as follows. Component of the mitochondrial ribosome (mitoribosome), a dedicated translation machinery responsible for the synthesis of mitochondrial genome-encoded proteins, including at least some of the essential transmembrane subunits of the mitochondrial respiratory chain. The mitoribosomes are attached to the mitochondrial inner membrane and translation products are cotranslationally integrated into the membrane. The chain is Large ribosomal subunit protein uL14m (MRPL38) from Saccharomyces cerevisiae (strain ATCC 204508 / S288c) (Baker's yeast).